The chain runs to 270 residues: tRNA pseudouridine synthase A (270 aa).

Aspartate 51 (nucleophile) is an active-site residue. Tyrosine 109 is a binding site for substrate.

This sequence belongs to the tRNA pseudouridine synthase TruA family. As to quaternary structure, homodimer.

The enzyme catalyses uridine(38/39/40) in tRNA = pseudouridine(38/39/40) in tRNA. Formation of pseudouridine at positions 38, 39 and 40 in the anticodon stem and loop of transfer RNAs. The polypeptide is tRNA pseudouridine synthase A (Burkholderia vietnamiensis (strain G4 / LMG 22486) (Burkholderia cepacia (strain R1808))).